Here is a 421-residue protein sequence, read N- to C-terminus: Tol-Pal system protein TolA (421 aa).

The Cytoplasmic portion of the chain corresponds to 1–13; that stretch reads MSKATEQNDKLKR. A helical transmembrane segment spans residues 14–34; it reads AIIISAVLHVILFAALIWSSF. Residues 35–421 are Periplasmic-facing; the sequence is DENIEASAGG…FKNAPLDFKP (387 aa). The tract at residues 48-310 is domain II (alpha-helical); sequence SSIDAVMVDS…LSSGKNAPKT (263 aa). The segment at 65–266 is disordered; sequence KRMQSQESSA…KAAADKKAAA (202 aa). Composition is skewed to basic and acidic residues over residues 73 to 175 and 206 to 266; these read SAKR…EAEA and EARK…KAAA. 13 tandem repeats follow at residues 224–229, 230–234, 235–240, 241–245, 246–250, 251–255, 256–260, 261–266, 267–271, 272–277, 278–282, 283–287, and 288–292. The tract at residues 224–292 is 13 X tandem repeats of [EDA]-K(1,2)-A(2,4); that stretch reads EKKAAAEKAA…EKAAAAKAAA (69 aa). A disordered region spans residues 300–336; it reads ELSSGKNAPKTGGGAKGNNASPAGSGNTKNNGASGAD. The tract at residues 311 to 421 is domain III (functional); sequence GGGAKGNNAS…FKNAPLDFKP (111 aa). Polar residues predominate over residues 317-332; that stretch reads NNASPAGSGNTKNNGA. An intrachain disulfide couples Cys363 to Cys388.

It belongs to the TolA family. As to quaternary structure, the Tol-Pal system is composed of five core proteins: the inner membrane proteins TolA, TolQ and TolR, the periplasmic protein TolB and the outer membrane protein Pal. They form a network linking the inner and outer membranes and the peptidoglycan layer. TolA interacts with TolQ and TolR via its N-terminal domain. Interacts with CpoB, and with the trimeric porins OmpC, OmpF, PhoE and LamB via its central domain. Interacts with TolB via its C-terminal domain. Also interacts with Pal via its C-terminal domain. This interaction is proton motive force dependent and requires TolQ and TolR.

It is found in the cell inner membrane. Part of the Tol-Pal system, which plays a role in outer membrane invagination during cell division and is important for maintaining outer membrane integrity. The Tol-Pal system is also required for polar localization of chemoreceptors clusters. The system also appears to be required for the activity of several outer membrane-localized enzymes with cell wall remodeling activity. Is involved in the uptake of group A colicins (colicins A, E1, E2, E3, and K) and in the uptake of filamentous phage DNA. The sequence is that of Tol-Pal system protein TolA from Escherichia coli (strain K12).